The sequence spans 376 residues: tRNA (guanine(26)-N(2))-dimethyltransferase (376 aa).

A Trm1 methyltransferase domain is found at 4 to 373 (VAVKEGLARI…APFGVVAEVM (370 aa)). Positions 36, 61, 78, 120, and 121 each coordinate S-adenosyl-L-methionine.

The protein belongs to the class I-like SAM-binding methyltransferase superfamily. Trm1 family.

The enzyme catalyses guanosine(26) in tRNA + 2 S-adenosyl-L-methionine = N(2)-dimethylguanosine(26) in tRNA + 2 S-adenosyl-L-homocysteine + 2 H(+). Functionally, dimethylates a single guanine residue at position 26 of a number of tRNAs using S-adenosyl-L-methionine as donor of the methyl groups. In Thermococcus kodakarensis (strain ATCC BAA-918 / JCM 12380 / KOD1) (Pyrococcus kodakaraensis (strain KOD1)), this protein is tRNA (guanine(26)-N(2))-dimethyltransferase.